A 482-amino-acid chain; its full sequence is Sensor histidine kinase CusS (482 aa).

Residues 1–15 are Cytoplasmic-facing; it reads MVSKPFQRPFSLATR. A helical transmembrane segment spans residues 16–36; it reads LTFFISLATIAAFFAFAWIMI. The Periplasmic portion of the chain corresponds to 37–186; it reads HSVKVHFAEQ…LHYINDLMNK (150 aa). A helical membrane pass occupies residues 187-207; the sequence is LIMTASVISILIVFIVLLAVH. An HAMP domain is found at 207-260; it reads HKGHAPIRSVSRQIQNITSKDLDVRLDPQTVPIELEQLVLSFNHMIERIEDVFT. The Cytoplasmic segment spans residues 208–482; sequence KGHAPIRSVS…RFVIVLPERG (275 aa). The Histidine kinase domain maps to 268 to 482; it reads DIAHEIRTPI…RFVIVLPERG (215 aa). Histidine 271 carries the post-translational modification Phosphohistidine; by autocatalysis.

Post-translationally, autophosphorylated.

The protein localises to the cell inner membrane. It catalyses the reaction ATP + protein L-histidine = ADP + protein N-phospho-L-histidine.. Member of the two-component regulatory system CusS/CusR involved in response to copper and silver. Acts as a copper/silver ion sensor. Activates CusR by phosphorylation. The polypeptide is Sensor histidine kinase CusS (cusS) (Escherichia coli O157:H7).